We begin with the raw amino-acid sequence, 178 residues long: UPF0114 protein in repA1-repA2 intergenic region (178 aa).

A run of 3 helical transmembrane segments spans residues 14 to 34 (WLIF…TLKF), 53 to 73 (LILV…LVMV), and 136 to 156 (WYVI…YIDR).

Belongs to the UPF0114 family.

The protein localises to the cell membrane. This is UPF0114 protein in repA1-repA2 intergenic region from Buchnera aphidicola subsp. Tetraneura caerulescens.